The sequence spans 182 residues: DOMON domain-containing protein Y73F4A.1 (182 aa).

Positions 1–18 (MFVLAIVFAFVFIPSSSS) are cleaved as a signal peptide. A DOMON domain is found at 26 to 143 (ELVSMNWNVK…CLNWMVVPGG (118 aa)). N-linked (GlcNAc...) asparagine glycans are attached at residues Asn-47 and Asn-128.

Its subcellular location is the secreted. The protein is DOMON domain-containing protein Y73F4A.1 of Caenorhabditis elegans.